We begin with the raw amino-acid sequence, 116 residues long: MVPKPLSLLLLLLLALSAAVVGGRKRVAAGGWRPIENLNSAEVQDVAQFAVSEHNKQANDELQYQSVVRGYTQVVAGTNYRLVIAAKDGAVVGNYEAVVWDKPWMHFRNLTSFRKV.

An N-terminal signal peptide occupies residues 1 to 22 (MVPKPLSLLLLLLLALSAAVVG). Residues 30–89 (GGWRPIENLNSAEVQDVAQFAVSEHNKQANDELQYQSVVRGYTQVVAGTNYRLVIAAKDG) form the Cystatin domain. Positions 73–77 (QVVAG) match the Secondary area of contact motif. Residue Asn-109 is glycosylated (N-linked (GlcNAc...) asparagine).

This sequence belongs to the cystatin family. Phytocystatin subfamily.

It is found in the secreted. Functionally, specific inhibitor of papain family cysteine proteinases. The sequence is that of Cysteine proteinase inhibitor 1 from Actinidia chinensis var. chinensis (Chinese soft-hair kiwi).